Here is a 443-residue protein sequence, read N- to C-terminus: ATP-dependent protease ATPase subunit HslU (443 aa).

ATP-binding positions include valine 18, 60-65 (GVGKTE), aspartate 256, glutamate 321, and arginine 393.

The protein belongs to the ClpX chaperone family. HslU subfamily. A double ring-shaped homohexamer of HslV is capped on each side by a ring-shaped HslU homohexamer. The assembly of the HslU/HslV complex is dependent on binding of ATP.

Its subcellular location is the cytoplasm. ATPase subunit of a proteasome-like degradation complex; this subunit has chaperone activity. The binding of ATP and its subsequent hydrolysis by HslU are essential for unfolding of protein substrates subsequently hydrolyzed by HslV. HslU recognizes the N-terminal part of its protein substrates and unfolds these before they are guided to HslV for hydrolysis. The protein is ATP-dependent protease ATPase subunit HslU of Azoarcus sp. (strain BH72).